Here is a 1726-residue protein sequence, read N- to C-terminus: Protein NLRC5 (1726 aa).

The NACHT domain occupies 207–537; sequence RVVMLSGQAG…THLTIQEFMA (331 aa). ATP is bound at residue 213 to 220; the sequence is GQAGSGKT. LRR repeat units lie at residues 879-902, 904-925, 1002-1025, 1026-1048, 1103-1126, 1128-1155, 1212-1235, 1351-1374, 1387-1411, 1421-1443, 1447-1468, 1502-1525, 1532-1553, 1560-1580, 1588-1609, 1616-1637, 1642-1662, and 1670-1691; these read LTVL…EHLP, LDTI…VVLL, NLDF…LPNM, ASLN…LLVQ, CHHL…TFVQ, LPKL…LLSL, LNSV…YLIT, AEFL…SKGE, AQKH…VLGN, SLSL…RGLV, SLEE…CFAQ, LIEL…ELVK, RLRK…MLVK, ALQQ…AVLG, ELTE…SVCE, ALKK…ASCL, SIED…LKLA, and KLKR…ALAT.

This sequence belongs to the NLRP family.

It localises to the cytoplasm. In terms of biological role, probable regulator of the NF-kappa-B and type I interferon signaling pathways. May also regulate the type II interferon signaling pathway. Plays a role in homeostatic control of innate immunity and in antiviral defense mechanisms. The sequence is that of Protein NLRC5 (nlrc5) from Ictalurus punctatus (Channel catfish).